The chain runs to 160 residues: V-type proton ATPase subunit c (160 aa).

At 1–8 the chain is on the vacuolar side; it reads MTELCPVY. Residues 9 to 31 form a helical membrane-spanning segment; it reads APFFGAIGCASAIIFTSLGAAYG. The Cytoplasmic portion of the chain corresponds to 32–53; that stretch reads TAKSGVGICATCVLRPDLLFKN. The chain crosses the membrane as a helical span at residues 54–74; it reads IVPVIMAGIIAIYGLVVSVLV. Residues 75–90 lie on the Vacuolar side of the membrane; the sequence is CYSLGQKQALYTGFIQ. The chain crosses the membrane as a helical span at residues 91–112; that stretch reads LGAGLSVGLSGLAAGFAIGIVG. Topologically, residues 113–124 are cytoplasmic; that stretch reads DAGVRGSSQQPR. A helical membrane pass occupies residues 125-150; that stretch reads LFVGMILILIFAEVLGLYGLIVALLL. Topologically, residues 151–160 are vacuolar; the sequence is NSRATQDVVC.

Belongs to the V-ATPase proteolipid subunit family. In terms of assembly, V-ATPase is a heteromultimeric enzyme composed of a peripheral catalytic V1 complex (components A to H) attached to an integral membrane V0 proton pore complex (components: a, c, c', c'', d, e, f and VOA1). The decameric c-ring forms the proton-conducting pore, and is composed of eight proteolipid subunits c, one subunit c' and one subunit c''.

The protein resides in the vacuole membrane. Its function is as follows. Proton-conducting pore forming subunit of the V0 complex of vacuolar(H+)-ATPase (V-ATPase), a multisubunit enzyme composed of a peripheral complex (V1) that hydrolyzes ATP and a membrane integral complex (V0) that translocates protons. V-ATPase is responsible for acidifying and maintaining the pH of intracellular compartments. This chain is V-type proton ATPase subunit c (VMA3), found in Saccharomyces cerevisiae (strain ATCC 204508 / S288c) (Baker's yeast).